The primary structure comprises 37 residues: Cytochrome b6-f complex subunit 5 (37 aa).

Residues 5-25 (LLSGIVLGLVPVTIAGLFVTA) form a helical membrane-spanning segment.

Belongs to the PetG family. In terms of assembly, the 4 large subunits of the cytochrome b6-f complex are cytochrome b6, subunit IV (17 kDa polypeptide, PetD), cytochrome f and the Rieske protein, while the 4 small subunits are PetG, PetL, PetM and PetN. The complex functions as a dimer.

The protein localises to the plastid. Its subcellular location is the chloroplast thylakoid membrane. Functionally, component of the cytochrome b6-f complex, which mediates electron transfer between photosystem II (PSII) and photosystem I (PSI), cyclic electron flow around PSI, and state transitions. PetG is required for either the stability or assembly of the cytochrome b6-f complex. This chain is Cytochrome b6-f complex subunit 5, found in Stigeoclonium helveticum (Green alga).